We begin with the raw amino-acid sequence, 136 residues long: MQTAGALFISPALIRCCTRGLIRPVSASFLNSPVNSSKQPSYSNFPLQVARREFQTSVVSRDIDTAAKFIGAGAATVGVAGSGAGIGTVFGSLIIGYARNPSLKQQLFSYAILGFALSEAMGLFCLMVAFLILFAM.

The N-terminal 61 residues, 1–61 (MQTAGALFIS…REFQTSVVSR (61 aa)), are a transit peptide targeting the mitochondrion. The helical transmembrane segment at 77–97 (VGVAGSGAGIGTVFGSLIIGY) threads the bilayer. The residue at position 104 (K104) is an N6,N6,N6-trimethyllysine. The helical transmembrane segment at 112-132 (ILGFALSEAMGLFCLMVAFLI) threads the bilayer.

Belongs to the ATPase C chain family. Homooctamer; the c-ring consists of eight c subunits forming a circle, and each subunit adopts a hairpin shape. Component of the ATP synthase complex composed at least of ATP5F1A/subunit alpha, ATP5F1B/subunit beta, ATP5MC1/subunit c (homooctomer), MT-ATP6/subunit a, MT-ATP8/subunit 8, ATP5ME/subunit e, ATP5MF/subunit f, ATP5MG/subunit g, ATP5MK/subunit k, ATP5MJ/subunit j, ATP5F1C/subunit gamma, ATP5F1D/subunit delta, ATP5F1E/subunit epsilon, ATP5PF/subunit F6, ATP5PB/subunit b, ATP5PD/subunit d, ATP5PO/subunit OSCP. ATP synthase complex consists of a soluble F(1) head domain (subunits alpha(3) and beta(3)) - the catalytic core - and a membrane F(0) domain - the membrane proton channel (subunits c, a, 8, e, f, g, k and j). These two domains are linked by a central stalk (subunits gamma, delta, and epsilon) rotating inside the F1 region and a stationary peripheral stalk (subunits F6, b, d, and OSCP). Interacts with TMEM70 (homooligomer form); this interaction facilitates the oligomer formation of subunit c/ATP5MC1 (c-ring) and the c-ring membrane insertion and also protects ATP5MC1 against intramitochondrial proteolysis. Trimethylated by ATPSCKMT at Lys-104. Methylation is required for proper incorporation of the C subunit into the ATP synthase complex and mitochondrial respiration.

It is found in the mitochondrion membrane. It carries out the reaction H(+)(in) = H(+)(out). In terms of biological role, subunit c, of the mitochondrial membrane ATP synthase complex (F(1)F(0) ATP synthase or Complex V) that produces ATP from ADP in the presence of a proton gradient across the membrane which is generated by electron transport complexes of the respiratory chain. ATP synthase complex consist of a soluble F(1) head domain - the catalytic core - and a membrane F(1) domain - the membrane proton channel. These two domains are linked by a central stalk rotating inside the F(1) region and a stationary peripheral stalk. During catalysis, ATP synthesis in the catalytic domain of F(1) is coupled via a rotary mechanism of the central stalk subunits to proton translocation. With the subunit a (MT-ATP6), forms the proton-conducting channel in the F(0) domain, that contains two crucial half-channels (inlet and outlet) that facilitate proton movement from the mitochondrial intermembrane space (IMS) into the matrix. Protons are taken up via the inlet half-channel and released through the outlet half-channel, following a Grotthuss mechanism. This Homo sapiens (Human) protein is ATP synthase F(0) complex subunit C1, mitochondrial.